Here is a 527-residue protein sequence, read N- to C-terminus: UvrABC system protein C (527 aa).

Residues 9–87 (KNPGCYIYKN…IKKYSPKYNI (79 aa)) enclose the GIY-YIG domain. The UVR domain occupies 191 to 226 (DSLIHELKNEMNEKSKNLQFEEALLIREEINAIERL).

Belongs to the UvrC family. Interacts with UvrB in an incision complex.

The protein localises to the cytoplasm. In terms of biological role, the UvrABC repair system catalyzes the recognition and processing of DNA lesions. UvrC both incises the 5' and 3' sides of the lesion. The N-terminal half is responsible for the 3' incision and the C-terminal half is responsible for the 5' incision. This chain is UvrABC system protein C, found in Methanococcus maripaludis (strain DSM 14266 / JCM 13030 / NBRC 101832 / S2 / LL).